We begin with the raw amino-acid sequence, 198 residues long: Recombination protein RecR (198 aa).

The C4-type zinc-finger motif lies at 57-72; it reads CSVCNNITDLDPCHIC. In terms of domain architecture, Toprim spans 80–175; it reads SIICVVQEPR…RVTRIAHGLP (96 aa).

It belongs to the RecR family.

May play a role in DNA repair. It seems to be involved in an RecBC-independent recombinational process of DNA repair. It may act with RecF and RecO. The polypeptide is Recombination protein RecR (Brevibacillus brevis (strain 47 / JCM 6285 / NBRC 100599)).